A 263-amino-acid chain; its full sequence is Phosphatidylglycerol--prolipoprotein diacylglyceryl transferase (263 aa).

A run of 4 helical transmembrane segments spans residues 6 to 26, 50 to 70, 85 to 105, and 112 to 132; these read VIFS…VLGI, LLTA…VLIY, TWEG…AVII, and IPTF…LFLG. An a 1,2-diacyl-sn-glycero-3-phospho-(1'-sn-glycerol)-binding site is contributed by Arg133. 3 consecutive transmembrane segments (helical) span residues 169-189, 197-217, and 233-253; these read LYEA…LFFL, GALT…VEFF, and MGQL…LGAL.

The protein belongs to the Lgt family.

The protein resides in the cell membrane. The enzyme catalyses L-cysteinyl-[prolipoprotein] + a 1,2-diacyl-sn-glycero-3-phospho-(1'-sn-glycerol) = an S-1,2-diacyl-sn-glyceryl-L-cysteinyl-[prolipoprotein] + sn-glycerol 1-phosphate + H(+). It participates in protein modification; lipoprotein biosynthesis (diacylglyceryl transfer). Its function is as follows. Catalyzes the transfer of the diacylglyceryl group from phosphatidylglycerol to the sulfhydryl group of the N-terminal cysteine of a prolipoprotein, the first step in the formation of mature lipoproteins. The chain is Phosphatidylglycerol--prolipoprotein diacylglyceryl transferase from Wolbachia pipientis wMel.